A 187-amino-acid polypeptide reads, in one-letter code: Pyridoxal 5'-phosphate synthase subunit PdxT (187 aa).

47-49 (GES) contributes to the L-glutamine binding site. Catalysis depends on Cys76, which acts as the Nucleophile. L-glutamine is bound by residues Arg102 and 128–129 (IR). Residues His165 and Glu167 each act as charge relay system in the active site.

Belongs to the glutaminase PdxT/SNO family. In the presence of PdxS, forms a dodecamer of heterodimers. Only shows activity in the heterodimer.

The catalysed reaction is aldehydo-D-ribose 5-phosphate + D-glyceraldehyde 3-phosphate + L-glutamine = pyridoxal 5'-phosphate + L-glutamate + phosphate + 3 H2O + H(+). The enzyme catalyses L-glutamine + H2O = L-glutamate + NH4(+). It functions in the pathway cofactor biosynthesis; pyridoxal 5'-phosphate biosynthesis. Catalyzes the hydrolysis of glutamine to glutamate and ammonia as part of the biosynthesis of pyridoxal 5'-phosphate. The resulting ammonia molecule is channeled to the active site of PdxS. The sequence is that of Pyridoxal 5'-phosphate synthase subunit PdxT from Methanococcus maripaludis (strain C7 / ATCC BAA-1331).